Reading from the N-terminus, the 621-residue chain is MTLDISKYPTLALAETPDELRLLPKETLPTLCDELRTYLLNSVSQSSGHLASGLGTVELTVALHYVYNTPFDQLIWDVGHQAYPHKILTGRREQMPTIRQKGGLHPFPWREESEYDTLSVGHSSTSISAALGMAICAEKEGQNRKVVSVIGDGAITAGMAFEAMNHAGDVHSDMLVILNDNEMSISENVGALNNHLARVLSGNLYTSIREGGKKVLSGVPPIKELVRRTEEHLKGMVVPGTLFEELGFNYIGPIDGHDVVELVKTLKNMRELKGPQFLHIMTKKGKGYEPAEKDPIGYHGVPKFDPAHNSLPKSSGGKPSFSNIFGDFLCDMAAQDPKLMAITPAMREGSGMVRFSKEYPEQYFDVAIAEQHAVTLATGMAIGGYNPIVAIYSTFLQRGYDQLIHDVAIMNLPVMFAIDRAGLVGADGQTHQGAFDLSYMRCIPNMVIMAPSDENECRQMLYTGHKHQGPSAVRYPRGNGMGTPIESEFTALEIGKGRLVRQGEKVAILSFGTFLANALEAAEALNATVADMRFVKPLDEALLRQLANEHDVLITIEENAIAGGAGAGVIEFMMQEKIMKPVLNLGLPDKFIHQGTQEELHEELGLDAKGIEQAIRHYLAK.

Thiamine diphosphate contacts are provided by residues His80 and 121 to 123 (GHS). Asp152 contacts Mg(2+). Residues 153 to 154 (GA), Asn181, Tyr288, and Glu370 each bind thiamine diphosphate. Residue Asn181 coordinates Mg(2+).

The protein belongs to the transketolase family. DXPS subfamily. In terms of assembly, homodimer. Mg(2+) is required as a cofactor. It depends on thiamine diphosphate as a cofactor.

It catalyses the reaction D-glyceraldehyde 3-phosphate + pyruvate + H(+) = 1-deoxy-D-xylulose 5-phosphate + CO2. The protein operates within metabolic intermediate biosynthesis; 1-deoxy-D-xylulose 5-phosphate biosynthesis; 1-deoxy-D-xylulose 5-phosphate from D-glyceraldehyde 3-phosphate and pyruvate: step 1/1. Catalyzes the acyloin condensation reaction between C atoms 2 and 3 of pyruvate and glyceraldehyde 3-phosphate to yield 1-deoxy-D-xylulose-5-phosphate (DXP). The polypeptide is 1-deoxy-D-xylulose-5-phosphate synthase (Vibrio vulnificus (strain CMCP6)).